Consider the following 418-residue polypeptide: Tryptophan synthase beta chain (418 aa).

Residues 1-18 (MTSTLPKASQPDPSSLQP) show a composition bias toward polar residues. The interval 1–28 (MTSTLPKASQPDPSSLQPSARPGAHGRF) is disordered. At K111 the chain carries N6-(pyridoxal phosphate)lysine.

This sequence belongs to the TrpB family. In terms of assembly, tetramer of two alpha and two beta chains. Requires pyridoxal 5'-phosphate as cofactor.

The catalysed reaction is (1S,2R)-1-C-(indol-3-yl)glycerol 3-phosphate + L-serine = D-glyceraldehyde 3-phosphate + L-tryptophan + H2O. The protein operates within amino-acid biosynthesis; L-tryptophan biosynthesis; L-tryptophan from chorismate: step 5/5. Its function is as follows. The beta subunit is responsible for the synthesis of L-tryptophan from indole and L-serine. This chain is Tryptophan synthase beta chain, found in Synechococcus sp. (strain CC9902).